The chain runs to 1009 residues: Protein-tyrosine kinase 2-beta (1009 aa).

The 321-residue stretch at 39-359 folds into the FERM domain; the sequence is RILKVCFYSN…GYCRLQGEHQ (321 aa). Ser361, Ser375, and Ser399 each carry phosphoserine. Tyr402 is modified (phosphotyrosine; by autocatalysis). Residues 425 to 683 enclose the Protein kinase domain; sequence VVLNRILGEG…ELVCSLSDVY (259 aa). ATP contacts are provided by residues 431–439, Lys457, and 503–509; these read LGEGFFGEV and ELYPYGE. Catalysis depends on Asp549, which acts as the Proton acceptor. Phosphotyrosine is present on Tyr579. The residue at position 580 (Tyr580) is a Phosphotyrosine; by SRC, FYN and LCK. The tract at residues 701–725 is disordered; it reads TPKILEPTAFQEPPPKPSRPKYRPP. Residues 712–725 are compositionally biased toward pro residues; it reads EPPPKPSRPKYRPP. Tyr722 bears the Phosphotyrosine mark. Ser762 is subject to Phosphoserine. The residue at position 765 (Thr765) is a Phosphothreonine. Residues 801-1009 form an interaction with TGFB1I1 region; that stretch reads KVKMRQILDK…LANLAHPPAE (209 aa). A phosphotyrosine mark is found at Tyr819 and Tyr834. Position 839 is a phosphoserine (Ser839). Thr842 is subject to Phosphothreonine. Tyr849 carries the phosphotyrosine modification. Residue Ser866 is modified to Phosphoserine. Positions 868 to 1009 are focal adhesion targeting (FAT); sequence QPTANLDRTD…LANLAHPPAE (142 aa). Position 881 is a phosphotyrosine; by SRC (Tyr881).

The protein belongs to the protein kinase superfamily. Tyr protein kinase family. FAK subfamily. Homodimer, or homooligomer. Interacts with SIRPA and SH2D3C. Interacts with ARHGAP10. Interacts with DLG4. Interacts with KCNA2. Interacts with NPHP1, ASAP1, ASAP2, ARHGAP26, SKAP2 and TGFB1I1. The Tyr-402 phosphorylated form interacts with SRC (via SH2 domain) and SRC family members. Forms a signaling complex with EPHA1, LCK and phosphatidylinositol 3-kinase; upon activation by EFNA1. Interacts with GRB2 (via SH2 domain). Interacts with P53/TP53 and MDM2. Interacts with MYLK. Interacts with BCAR1. Interacts with PDPK1. Interacts (hypophosphorylated) with PXN. Interacts with RB1CC1. Interacts with RHOU. Interacts with VAV1. Interacts with LPXN and PTPN12. In terms of processing, phosphorylated on tyrosine residues in response to various stimuli that elevate the intracellular calcium concentration; this activation is indirect and may be mediated by production of reactive oxygen species (ROS). Tyr-402 is the major autophosphorylation site, but other kinases can also phosphorylate Tyr-402. Autophosphorylation occurs in trans, i.e. one subunit of the dimeric receptor phosphorylates tyrosine residues on the other subunit. Phosphorylation at Tyr-402 promotes interaction with SRC and SRC family members, leading to phosphorylation at Tyr-579; Tyr-580 and Tyr-881. Phosphorylation at Tyr-881 is important for interaction with GRB2. Phosphorylated on tyrosine residues upon activation of FGR and PKC. Recruitment by NPHP1 to cell matrix adhesions initiates Tyr-402 phosphorylation. In monocytes, adherence to substrata is required for tyrosine phosphorylation and kinase activation. Angiotensin II, thapsigargin and L-alpha-lysophosphatidic acid (LPA) also induce autophosphorylation and increase kinase activity. Phosphorylation by MYLK promotes ITGB2 activation and is thus essential to trigger neutrophil transmigration during lung injury. Dephosphorylated by PTPN12. As to expression, most abundant in the brain, with highest levels in amygdala and hippocampus. Low levels in kidney (at protein level). Also expressed in spleen and lymphocytes.

The protein resides in the cytoplasm. It is found in the perinuclear region. It localises to the cell membrane. Its subcellular location is the cell junction. The protein localises to the focal adhesion. The protein resides in the cell projection. It is found in the lamellipodium. It localises to the cell cortex. Its subcellular location is the nucleus. The catalysed reaction is L-tyrosyl-[protein] + ATP = O-phospho-L-tyrosyl-[protein] + ADP + H(+). Activated in response to stimuli that lead to increased intracellular Ca(2+) levels; this activation is indirect and may be mediated by calcium-mediated production of reactive oxygen species (ROS). Activated by autophosphorylation at Tyr-402; this creates a binding site for SRC family kinases and leads to phosphorylation at additional tyrosine residues. Phosphorylation at Tyr-402, Tyr-579 and Tyr-580 is required for optimal kinase activity. Inhibited by PF-562,271, BIRB796, PF-4618433 and by PF-431396, PF-2318841 and their derivatives. Inhibited by sulfoximine-substituted trifluoromethylpyrimidines. Inhibited by 4-amino and 5-aryl substituted pyridinone compounds. In terms of biological role, non-receptor protein-tyrosine kinase that regulates reorganization of the actin cytoskeleton, cell polarization, cell migration, adhesion, spreading and bone remodeling. Plays a role in the regulation of the humoral immune response, and is required for normal levels of marginal B-cells in the spleen and normal migration of splenic B-cells. Required for normal macrophage polarization and migration towards sites of inflammation. Regulates cytoskeleton rearrangement and cell spreading in T-cells, and contributes to the regulation of T-cell responses. Promotes osteoclastic bone resorption; this requires both PTK2B/PYK2 and SRC. May inhibit differentiation and activity of osteoprogenitor cells. Functions in signaling downstream of integrin and collagen receptors, immune receptors, G-protein coupled receptors (GPCR), cytokine, chemokine and growth factor receptors, and mediates responses to cellular stress. Forms multisubunit signaling complexes with SRC and SRC family members upon activation; this leads to the phosphorylation of additional tyrosine residues, creating binding sites for scaffold proteins, effectors and substrates. Regulates numerous signaling pathways. Promotes activation of phosphatidylinositol 3-kinase and of the AKT1 signaling cascade. Promotes activation of NOS3. Regulates production of the cellular messenger cGMP. Promotes activation of the MAP kinase signaling cascade, including activation of MAPK1/ERK2, MAPK3/ERK1 and MAPK8/JNK1. Promotes activation of Rho family GTPases, such as RHOA and RAC1. Recruits the ubiquitin ligase MDM2 to P53/TP53 in the nucleus, and thereby regulates P53/TP53 activity, P53/TP53 ubiquitination and proteasomal degradation. Acts as a scaffold, binding to both PDPK1 and SRC, thereby allowing SRC to phosphorylate PDPK1 at 'Tyr-9, 'Tyr-373', and 'Tyr-376'. Promotes phosphorylation of NMDA receptors by SRC family members, and thereby contributes to the regulation of NMDA receptor ion channel activity and intracellular Ca(2+) levels. May also regulate potassium ion transport by phosphorylation of potassium channel subunits. Phosphorylates SRC; this increases SRC kinase activity. Phosphorylates ASAP1, NPHP1, KCNA2 and SHC1. Promotes phosphorylation of ASAP2, RHOU and PXN; this requires both SRC and PTK2/PYK2. In Homo sapiens (Human), this protein is Protein-tyrosine kinase 2-beta (PTK2B).